Here is a 357-residue protein sequence, read N- to C-terminus: Phenylalanine--tRNA ligase alpha subunit (357 aa).

Position 258 (Glu-258) interacts with Mg(2+).

The protein belongs to the class-II aminoacyl-tRNA synthetase family. Phe-tRNA synthetase alpha subunit type 1 subfamily. Tetramer of two alpha and two beta subunits. The cofactor is Mg(2+).

Its subcellular location is the cytoplasm. The enzyme catalyses tRNA(Phe) + L-phenylalanine + ATP = L-phenylalanyl-tRNA(Phe) + AMP + diphosphate + H(+). In Caulobacter vibrioides (strain ATCC 19089 / CIP 103742 / CB 15) (Caulobacter crescentus), this protein is Phenylalanine--tRNA ligase alpha subunit.